The primary structure comprises 146 residues: 3-hydroxyacyl-[acyl-carrier-protein] dehydratase FabZ (146 aa).

Histidine 49 is a catalytic residue.

The protein belongs to the thioester dehydratase family. FabZ subfamily.

It is found in the cytoplasm. It carries out the reaction a (3R)-hydroxyacyl-[ACP] = a (2E)-enoyl-[ACP] + H2O. Functionally, involved in unsaturated fatty acids biosynthesis. Catalyzes the dehydration of short chain beta-hydroxyacyl-ACPs and long chain saturated and unsaturated beta-hydroxyacyl-ACPs. The polypeptide is 3-hydroxyacyl-[acyl-carrier-protein] dehydratase FabZ (Psychrobacter arcticus (strain DSM 17307 / VKM B-2377 / 273-4)).